Here is a 457-residue protein sequence, read N- to C-terminus: UDP-N-acetylmuramate--L-alanine ligase (457 aa).

112–118 (GAHGKTS) is an ATP binding site.

The protein belongs to the MurCDEF family.

The protein localises to the cytoplasm. The enzyme catalyses UDP-N-acetyl-alpha-D-muramate + L-alanine + ATP = UDP-N-acetyl-alpha-D-muramoyl-L-alanine + ADP + phosphate + H(+). It participates in cell wall biogenesis; peptidoglycan biosynthesis. In terms of biological role, cell wall formation. This chain is UDP-N-acetylmuramate--L-alanine ligase, found in Desulfosudis oleivorans (strain DSM 6200 / JCM 39069 / Hxd3) (Desulfococcus oleovorans).